Consider the following 1007-residue polypeptide: Inversin-A (1007 aa).

16 ANK repeats span residues 9–39, 43–72, 76–105, 109–140, 144–173, 177–209, 216–246, 250–279, 284–313, 317–346, 352–381, 385–414, 418–447, 451–480, 484–513, and 519–549; these read SLAS…VIDQ, LGRT…QVNH, SGRT…DCTH, RDIT…QVDA, RKQT…NIGI, EGKI…TESL, EGRT…NVAP, LFRT…SPNI, QGAT…VRDE, EGRT…ELEV, YGGT…QVDA, MKHT…KVHL, DGRS…NPDA, EGRT…DPNI, NGRT…FPNQ, and ERYT…SIAA. Residues 486-494 carry the D-box 1 motif; that stretch reads RTALHWSCN. The 30-residue stretch at 551 to 580 folds into the IQ 1 domain; the sequence is QDIAASKIQAVYKGHKVRRAFQERKNLLMK. Composition is skewed to basic and acidic residues over residues 585–599 and 608–652; these read RKGA…ENRQ and GKQK…HQEE. 2 disordered regions span residues 585–837 and 868–893; these read RKGA…KEFS and SAKS…SALK. A compositionally biased stretch (polar residues) spans 684–701; it reads IQSSPIEHVHTNSIQTRM. Residues 702-712 are compositionally biased toward low complexity; that stretch reads SPSRTSISHSS. Residues 727-745 show a composition bias toward polar residues; the sequence is NPTQNNTQPRRTSRPQIES. A compositionally biased stretch (basic and acidic residues) spans 751-771; it reads HRIEDLVQKESRRKSHREERK. The segment covering 772–784 has biased composition (basic residues); that stretch reads GSHRQRASSHHRL. Positions 870–893 are enriched in polar residues; sequence KSGQRPLTETQSPEKACQGSSALK. A D-box 2 motif is present at residues 964 to 972; sequence RKQLFQRKK. Residues 971-1000 enclose the IQ 2 domain; the sequence is KKHAATVIQKAWRTYCIRKSSRKTRHSHLR.

Interacts with apc2. Binds calmodulin.

It localises to the cytoplasm. It is found in the cytoskeleton. Required for normal renal development and establishment of left-right axis. Probably acts as a molecular switch between different Wnt signaling pathways. Inhibits the canonical Wnt pathway by targeting cytoplasmic disheveled for degradation by the ubiquitin-proteasome. This suggests that it is required in renal development to oppose the repression of terminal differentiation of tubular epithelial cells by Wnt signaling. Plays a central role in convergent extension movements in gastrulating embryos, a processus regulated by Wnt signaling. In Xenopus laevis (African clawed frog), this protein is Inversin-A (invs-a).